A 366-amino-acid chain; its full sequence is Ribosomal RNA large subunit methyltransferase M (366 aa).

S-adenosyl-L-methionine-binding positions include Ser-188, 221 to 224, Asp-240, Asp-260, and Asp-277; that span reads CPGG. Catalysis depends on Lys-306, which acts as the Proton acceptor.

The protein belongs to the class I-like SAM-binding methyltransferase superfamily. RNA methyltransferase RlmE family. RlmM subfamily. As to quaternary structure, monomer.

The protein resides in the cytoplasm. The catalysed reaction is cytidine(2498) in 23S rRNA + S-adenosyl-L-methionine = 2'-O-methylcytidine(2498) in 23S rRNA + S-adenosyl-L-homocysteine + H(+). Its function is as follows. Catalyzes the 2'-O-methylation at nucleotide C2498 in 23S rRNA. This chain is Ribosomal RNA large subunit methyltransferase M, found in Citrobacter koseri (strain ATCC BAA-895 / CDC 4225-83 / SGSC4696).